Consider the following 338-residue polypeptide: MPRAQLQRFLSGISAEGIRTVYLDPKDAAKAKLDAMHSSPSSRYVVLEGRAAKPRGKKVGRRFKILSNKDIDGVLQEAQKGLDFVITEVQDWKIIPLENMIAKLHKIHTRLYAVARSPAEVRKMFSILDVGVDGVIFTASTVGDVREALVHLGTKSFRLQPARITEIREVGDGERVCVDTASMLERGEGMLVGSRSNFMFLVHNESVGSSFTSPRPFRVNAGAVHSYTLGTDGNTLYLSEVETGTEVLVLDSHGRARRAAVGRSKIERRPMLMIKAEADGEIGGIIAQDAETIRFVRPGGGLVSVTHLKKGDKVLVHSKPAAGRHFGMEVADEYILEK.

The protein belongs to the archaeal-type DHQ synthase family.

It carries out the reaction 2-amino-2,3,7-trideoxy-D-lyxo-hept-6-ulosonate + NAD(+) + H2O = 3-dehydroquinate + NH4(+) + NADH + H(+). Catalyzes the oxidative deamination and cyclization of 2-amino-3,7-dideoxy-D-threo-hept-6-ulosonic acid (ADH) to yield 3-dehydroquinate (DHQ), which is fed into the canonical shikimic pathway of aromatic amino acid biosynthesis. This is 3-dehydroquinate synthase from Cenarchaeum symbiosum (strain A).